A 102-amino-acid chain; its full sequence is Small ribosomal subunit protein uS10 (102 aa).

Belongs to the universal ribosomal protein uS10 family. In terms of assembly, part of the 30S ribosomal subunit.

Its function is as follows. Involved in the binding of tRNA to the ribosomes. This is Small ribosomal subunit protein uS10 from Nitrosomonas eutropha (strain DSM 101675 / C91 / Nm57).